A 243-amino-acid polypeptide reads, in one-letter code: 1-(5-phosphoribosyl)-5-[(5-phosphoribosylamino)methylideneamino] imidazole-4-carboxamide isomerase (243 aa).

The active-site Proton acceptor is the D8. D129 serves as the catalytic Proton donor.

This sequence belongs to the HisA/HisF family.

Its subcellular location is the cytoplasm. It carries out the reaction 1-(5-phospho-beta-D-ribosyl)-5-[(5-phospho-beta-D-ribosylamino)methylideneamino]imidazole-4-carboxamide = 5-[(5-phospho-1-deoxy-D-ribulos-1-ylimino)methylamino]-1-(5-phospho-beta-D-ribosyl)imidazole-4-carboxamide. Its pathway is amino-acid biosynthesis; L-histidine biosynthesis; L-histidine from 5-phospho-alpha-D-ribose 1-diphosphate: step 4/9. The chain is 1-(5-phosphoribosyl)-5-[(5-phosphoribosylamino)methylideneamino] imidazole-4-carboxamide isomerase from Brucella anthropi (strain ATCC 49188 / DSM 6882 / CCUG 24695 / JCM 21032 / LMG 3331 / NBRC 15819 / NCTC 12168 / Alc 37) (Ochrobactrum anthropi).